The chain runs to 250 residues: Acidic leucine-rich nuclear phosphoprotein 32 family member E (250 aa).

Serine 8 carries the phosphoserine modification. LRR repeat units lie at residues 43–64 (ELEF…PSLP), 65–87 (KLRK…AEKC), and 89–110 (NLTY…EALQ). The region spanning 123–161 (CEITTLEDYRESIFELLPQVTYLDGFDAEDNEAPDSEAD) is the LRRCT domain. 3 stretches are compositionally biased toward acidic residues: residues 149–171 (DAED…DGDE), 178–191 (EYEE…EGSE), and 205–227 (IQDE…EEEA). Residues 149 to 250 (DAEDNEAPDS…EGEDDDEDDD (102 aa)) are disordered. The tract at residues 194–247 (EVGLSYLMKEDIQDEEDDDDYVEEEEEEGGEEEADVRGEKRKREAEDEGEDDDE) is ZID domain. Positions 228–238 (DVRGEKRKREA) are enriched in basic and acidic residues. The span at 239–250 (EDEGEDDDEDDD) shows a compositional bias: acidic residues.

This sequence belongs to the ANP32 family. As to quaternary structure, component of a SWR1-like complex. Interacts with H2A.Z/H2AZ1. Post-translationally, phosphorylated. The phosphorylation is nuclear localization signal (NLS)-dependent.

The protein localises to the cytoplasm. Its subcellular location is the nucleus. Its function is as follows. Histone chaperone that specifically mediates the genome-wide removal of histone H2A.Z/H2AZ1 from the nucleosome: removes H2A.Z/H2AZ1 from its normal sites of deposition, especially from enhancer and insulator regions. Not involved in deposition of H2A.Z/H2AZ1 in the nucleosome. May stabilize the evicted H2A.Z/H2AZ1-H2B dimer, thus shifting the equilibrium towards dissociation and the off-chromatin state. Inhibits activity of protein phosphatase 2A (PP2A). Does not inhibit protein phosphatase 1. May play a role in cerebellar development and synaptogenesis. The chain is Acidic leucine-rich nuclear phosphoprotein 32 family member E (anp32e) from Danio rerio (Zebrafish).